Consider the following 174-residue polypeptide: MAVLSTIYSITRASTPTMASLTNDSPSPLPSSSPSKLPSPTSPSKKPLKLRQVSKQMGSQNQQRRGNKPSIAQIERAFGSGSYRDSEGEMDMNTVFDELLLGHANKFESKIEKKLREIGEIFVARTEPKLRSSGKPVLMFTIQWILPIWIMSLLVACGVIKLPFSIPFLDDLIM.

The N-terminal 54 residues, 1–54, are a transit peptide targeting the chloroplast; the sequence is MAVLSTIYSITRASTPTMASLTNDSPSPLPSSSPSKLPSPTSPSKKPLKLRQVS. Residues 14–24 are compositionally biased toward polar residues; it reads STPTMASLTND. The tract at residues 14–71 is disordered; that stretch reads STPTMASLTNDSPSPLPSSSPSKLPSPTSPSKKPLKLRQVSKQMGSQNQQRRGNKPSI. Residues 30-45 are compositionally biased toward low complexity; the sequence is PSSSPSKLPSPTSPSK. Residues 53 to 64 show a composition bias toward polar residues; sequence VSKQMGSQNQQR. The chain crosses the membrane as a helical span at residues 140–160; it reads FTIQWILPIWIMSLLVACGVI.

It localises to the plastid. It is found in the chloroplast thylakoid membrane. In terms of biological role, probable subunit of the chloroplast NAD(P)H dehydrogenase (NDH) complex of the photosynthetic electron transport chain. Required for both formation and activity of NDH. May function in assembly or stabilization of the NDH complex. In Arabidopsis thaliana (Mouse-ear cress), this protein is Probable NAD(P)H dehydrogenase subunit CRR3, chloroplastic.